The following is a 151-amino-acid chain: Ribosome maturation factor RimP (151 aa).

Belongs to the RimP family.

It localises to the cytoplasm. Functionally, required for maturation of 30S ribosomal subunits. This is Ribosome maturation factor RimP from Aliivibrio fischeri (strain MJ11) (Vibrio fischeri).